Here is a 309-residue protein sequence, read N- to C-terminus: Polyprenal reductase (309 aa).

Residues 1 to 3 lie on the Cytoplasmic side of the membrane; sequence MFH. A helical membrane pass occupies residues 4–24; sequence ILSIVNIIWLLLALCFGAAFC. The Lumenal segment spans residues 25 to 67; the sequence is LNKFSVKLPNRVEHVFQDFIRYGKTKENIKRASWQLVFDLSKR. The chain crosses the membrane as a helical span at residues 68 to 88; that stretch reads YFYHFYVVSVMWNGLLLLFSI. Topologically, residues 89-114 are cytoplasmic; it reads RSVVMSEAFPDWIIDVLGSLTGRSRG. The chain crosses the membrane as a helical span at residues 115–135; it reads AWNEIHLSTLLLQVLLWVHTL. Over 136–150 the chain is Lumenal; the sequence is RRLLECLFVSVFSDG. A helical membrane pass occupies residues 151 to 171; the sequence is VINVVQYAFGLSYYIILGLTV. The Cytoplasmic segment spans residues 172–185; that stretch reads LCTNDSLPQSESVS. A helical transmembrane segment spans residues 186–206; the sequence is FFNQLTWYHVVGTLLFFWASF. At 207–255 the chain is on the lumenal side; it reads LQHQSLSLLAKMRTDSSGKVETLAHKMPCGGWFELVSCPHYLAELLIYA. Residues 256–276 traverse the membrane as a helical segment; the sequence is AMCVCCGCASLTWWMVVLYVL. Residues 277–309 lie on the Cytoplasmic side of the membrane; that stretch reads CNQALAAQLCHEYYRSKFKTYPHHRKAFIPFVL.

This sequence belongs to the steroid 5-alpha reductase family. Polyprenal reductase subfamily.

It is found in the endoplasmic reticulum membrane. It carries out the reaction a di-trans,poly-cis-dolichal + NADP(+) = a di-trans,poly-cis-polyprenal + NADPH + H(+). It catalyses the reaction a 3-oxo-5alpha-steroid + NADP(+) = a 3-oxo-Delta(4)-steroid + NADPH + H(+). The catalysed reaction is androst-4-ene-3,17-dione + NADPH + H(+) = 5alpha-androstan-3,17-dione + NADP(+). The enzyme catalyses 17beta-hydroxy-5alpha-androstan-3-one + NADP(+) = testosterone + NADPH + H(+). It functions in the pathway protein modification; protein glycosylation. Functionally, plays a key role in early steps of protein N-linked glycosylation by being involved in the conversion of polyprenol into dolichol. Acts as a polyprenal reductase that mediates the reduction of polyprenal into dolichal in a NADP-dependent mechanism. Dolichols are required for the synthesis of dolichol-linked monosaccharides and the oligosaccharide precursor used for N-glycosylation. Also able to convert testosterone (T) into 5-alpha-dihydrotestosterone (DHT). In Danio rerio (Zebrafish), this protein is Polyprenal reductase (srd5a3).